The following is a 258-amino-acid chain: ADP-dependent (S)-NAD(P)H-hydrate dehydratase (258 aa).

The YjeF C-terminal domain maps to 1–258; the sequence is MGRLQRTLSN…VIECIPKTIR (258 aa). Residue G201 participates in AMP binding. D202 serves as a coordination point for (6S)-NADPHX.

The protein belongs to the NnrD/CARKD family. In terms of assembly, homotetramer. It depends on Mg(2+) as a cofactor.

The catalysed reaction is (6S)-NADHX + ADP = AMP + phosphate + NADH + H(+). The enzyme catalyses (6S)-NADPHX + ADP = AMP + phosphate + NADPH + H(+). Its function is as follows. Catalyzes the dehydration of the S-form of NAD(P)HX at the expense of ADP, which is converted to AMP. Together with NAD(P)HX epimerase, which catalyzes the epimerization of the S- and R-forms, the enzyme allows the repair of both epimers of NAD(P)HX, a damaged form of NAD(P)H that is a result of enzymatic or heat-dependent hydration. This Natrialba magadii (strain ATCC 43099 / DSM 3394 / CCM 3739 / CIP 104546 / IAM 13178 / JCM 8861 / NBRC 102185 / NCIMB 2190 / MS3) (Natronobacterium magadii) protein is ADP-dependent (S)-NAD(P)H-hydrate dehydratase.